The primary structure comprises 109 residues: Cell division suppressor protein YneA (109 aa).

Residues 39–90 enclose the LysM domain; the sequence is SEVNVSEGDSLWALADQYAGKSDMAKADFVSWVEKENNLADGHVEAGDSVVI.

The protein belongs to the YneA family.

The protein localises to the cytoplasm. Inhibits cell division during the SOS response. Affects a later stage of the cell division protein assembly, after the assembly of the Z ring, by probably suppressing recruitment of FtsL and/or DivIC to the division machinery. The polypeptide is Cell division suppressor protein YneA (Listeria monocytogenes serotype 4b (strain CLIP80459)).